A 332-amino-acid polypeptide reads, in one-letter code: Polyprenyl transferase yanG (332 aa).

The next 8 membrane-spanning stretches (helical) occupy residues 42–62, 72–92, 145–165, 170–190, 200–220, 242–262, 266–286, and 300–320; these read IWGA…LAFA, VTAT…FFVV, PAVT…PFMK, FPQV…WVGV, ALPL…FYAT, VKIL…MTAL, LSLI…PWHV, and VFKA…LELV.

It belongs to the UbiA prenyltransferase family. It depends on Mg(2+) as a cofactor.

Its subcellular location is the membrane. It functions in the pathway secondary metabolite biosynthesis; terpenoid biosynthesis. Its function is as follows. Polyprenyl transferase; part of the gene cluster that mediates the biosynthesis of yanuthone D, a fungal isoprenoid epoxycyclohexenone that acts as an antibiotic against fungi and bacteria. The first step of the pathway is the synthesis of 6-methylsalicylic acid (6-MSA) by the polyketide synthase yanA. 6-MSA is then converted to m-cresol by the decarboxylase yanB. The cytochrome P450 monooxygenase yanC then catalyzes the oxidation of m-cresol to toluquinol. Epoxidation of toluquinol is then performed by the short chain dehydrogenase yanD, with the help of yanE, and a further prenylation by yanG leads to 7-deacetoxyyanuthone A. The next step is the hydroxylation of C-22 of 7-deacetoxyyanuthone A by the cytochrome P450 monooxygenase yanH to yield 22-deacetylyanuthone A. O-Mevalon transferase yanI then attaches mevalon to the hydroxyl group of 22-deacetylyanuthone A to produce yanuthone E. Finally, the FAD-dependent monooxygenase yanF oxidizes the hydroxyl group at C15 of yanuthone E to form yanuthone D. Furthermore, several branching points in the pathway lead to the production of yanuthones F and G from 7-deacetoxyyanuthone A; yanuthones H and I from 22-deacetylyanuthone A; and yanuthone J from yanuthone E. YanG is also involved in the synthesis of yanuthone X1 which does not have 6-methylsalicylic acid (6-MSA) as precursor. The sequence is that of Polyprenyl transferase yanG from Aspergillus niger (strain ATCC 1015 / CBS 113.46 / FGSC A1144 / LSHB Ac4 / NCTC 3858a / NRRL 328 / USDA 3528.7).